A 234-amino-acid polypeptide reads, in one-letter code: Ras-related protein Rab-20 (234 aa).

Glycine 17, lysine 18, threonine 19, aspartate 32, and threonine 36 together coordinate GTP. Residue threonine 19 coordinates Mg(2+). 2 short sequence motifs (switch) span residues 28 to 41 and 55 to 72; these read RRFP…GGAF and DTAG…YCRG. 2 residues coordinate Mg(2+): threonine 36 and aspartate 55. GTP is bound by residues glycine 58, asparagine 113, lysine 114, and aspartate 116. The tract at residues 125-144 is disordered; the sequence is GQEKEECSPNMDAGDRVSPR. Over residues 126-142 the composition is skewed to basic and acidic residues; it reads QEKEECSPNMDAGDRVS. The GTP site is built by alanine 184 and lysine 185. Positions 212 to 234 are disordered; that stretch reads RPSHTVDISSHKPPKRTRSGCCA. Over residues 223–234 the composition is skewed to basic residues; the sequence is KPPKRTRSGCCA. S-geranylgeranyl cysteine attachment occurs at residues cysteine 232 and cysteine 233.

The protein belongs to the small GTPase superfamily. Rab family. Mg(2+) is required as a cofactor. Low or absent expression in normal pancreas and stronger expression in 15 of 18 exocrine pancreatic adenocarcinomas (at protein level).

The protein localises to the golgi apparatus. The protein resides in the cytoplasmic vesicle. It is found in the phagosome. It localises to the phagosome membrane. It carries out the reaction GTP + H2O = GDP + phosphate + H(+). With respect to regulation, regulated by guanine nucleotide exchange factors (GEFs) which promote the exchange of bound GDP for free GTP. Regulated by GTPase activating proteins (GAPs) which increase the GTP hydrolysis activity. Inhibited by GDP dissociation inhibitors (GDIs). Its function is as follows. The small GTPases Rab are key regulators of intracellular membrane trafficking, from the formation of transport vesicles to their fusion with membranes. Rabs cycle between an inactive GDP-bound form and an active GTP-bound form that is able to recruit to membranes different sets of downstream effectors directly responsible for vesicle formation, movement, tethering and fusion. RAB20 plays a role in apical endocytosis/recycling. Plays a role in the maturation and acidification of phagosomes that engulf pathogens, such as S.aureus and M.tuberculosis. Plays a role in the fusion of phagosomes with lysosomes. This chain is Ras-related protein Rab-20, found in Homo sapiens (Human).